Reading from the N-terminus, the 289-residue chain is Acetyl-coenzyme A carboxylase carboxyl transferase subunit beta 2 (289 aa).

One can recognise a CoA carboxyltransferase N-terminal domain in the interval 25–289; sequence VWTKCPSCDQ…TNTSIRLEVK (265 aa). Zn(2+) is bound by residues cysteine 29, cysteine 32, cysteine 48, and cysteine 51. The C4-type zinc-finger motif lies at 29–51; the sequence is CPSCDQVLYRIALKENLEVCPKC.

It belongs to the AccD/PCCB family. Acetyl-CoA carboxylase is a heterohexamer composed of biotin carboxyl carrier protein (AccB), biotin carboxylase (AccC) and two subunits each of ACCase subunit alpha (AccA) and ACCase subunit beta (AccD). Zn(2+) serves as cofactor.

The protein localises to the cytoplasm. The catalysed reaction is N(6)-carboxybiotinyl-L-lysyl-[protein] + acetyl-CoA = N(6)-biotinyl-L-lysyl-[protein] + malonyl-CoA. Its pathway is lipid metabolism; malonyl-CoA biosynthesis; malonyl-CoA from acetyl-CoA: step 1/1. Its function is as follows. Component of the acetyl coenzyme A carboxylase (ACC) complex. Biotin carboxylase (BC) catalyzes the carboxylation of biotin on its carrier protein (BCCP) and then the CO(2) group is transferred by the transcarboxylase to acetyl-CoA to form malonyl-CoA. The sequence is that of Acetyl-coenzyme A carboxylase carboxyl transferase subunit beta 2 from Vibrio parahaemolyticus serotype O3:K6 (strain RIMD 2210633).